The chain runs to 342 residues: Cathepsin B-like cysteine proteinase (342 aa).

The first 17 residues, 1–17, serve as a signal peptide directing secretion; the sequence is MLKIAVYIVSLFTFLEA. The propeptide at 18 to 89 is activation peptide; sequence HVTTRNNQRI…TVDHHDLNVE (72 aa). 6 cysteine pairs are disulfide-bonded: Cys-103–Cys-132, Cys-115–Cys-159, Cys-151–Cys-217, Cys-152–Cys-155, Cys-188–Cys-221, and Cys-196–Cys-207. Residue Cys-118 is part of the active site. Residues His-288 and Asn-308 contribute to the active site.

The protein belongs to the peptidase C1 family. As to expression, intestine (gut).

Its function is as follows. Thiol protease. Has a role as a digestive enzyme. This Schistosoma japonicum (Blood fluke) protein is Cathepsin B-like cysteine proteinase (CATB).